A 366-amino-acid chain; its full sequence is GTPase Obg (366 aa).

An Obg domain is found at 1 to 161; the sequence is MRFVDEARIQ…FNLRLELKIL (161 aa). Residues 121-148 form a disordered region; sequence SGGRGGKGNEHFKSSTMRAPRFSQPGEP. The OBG-type G domain occupies 162 to 334; sequence ADAGLIGLPN…LVQELWQVCE (173 aa). Residues 168–175, 193–197, 217–220, 287–290, and 315–317 contribute to the GTP site; these read GLPNAGKS, FTTLT, DIPG, NKID, and SAR. Positions 175 and 195 each coordinate Mg(2+).

This sequence belongs to the TRAFAC class OBG-HflX-like GTPase superfamily. OBG GTPase family. In terms of assembly, monomer. Mg(2+) serves as cofactor.

It is found in the cytoplasm. Functionally, an essential GTPase which binds GTP, GDP and possibly (p)ppGpp with moderate affinity, with high nucleotide exchange rates and a fairly low GTP hydrolysis rate. Plays a role in control of the cell cycle, stress response, ribosome biogenesis and in those bacteria that undergo differentiation, in morphogenesis control. In Desulfovibrio desulfuricans (strain ATCC 27774 / DSM 6949 / MB), this protein is GTPase Obg.